The following is a 184-amino-acid chain: MTQAKLETEVSKYMSYVLRHAPEAAGLTLDAEGWVSFDELEKALTSKYDVSRADIIEIVENNPKNRFTIVDNRIRANQGHSVDVDLALTPVEPPAALYHGTSSANWHSIEREGLKKMQRHHVHLSADVETAKIVATRRKGEYLILRVDAARMFSEGHSFFVSDNGVWLAESVPVQYLSPDAGTP.

It belongs to the KptA/TPT1 family.

Functionally, removes the 2'-phosphate from RNA via an intermediate in which the phosphate is ADP-ribosylated by NAD followed by a presumed transesterification to release the RNA and generate ADP-ribose 1''-2''-cyclic phosphate (APPR&gt;P). May function as an ADP-ribosylase. The protein is Probable RNA 2'-phosphotransferase of Rhizobium leguminosarum bv. trifolii (strain WSM2304).